A 182-amino-acid chain; its full sequence is Flavodoxin (182 aa).

The region spanning 4-173 is the Flavodoxin-like domain; the sequence is IGLFFGSDTG…RLKGWLSLIA (170 aa).

It belongs to the flavodoxin family. Requires FMN as cofactor.

In terms of biological role, low-potential electron donor to a number of redox enzymes. NifF is the electron donor to nitrogenase. The protein is Flavodoxin (nifF) of Rhodobacter capsulatus (strain ATCC BAA-309 / NBRC 16581 / SB1003).